Reading from the N-terminus, the 345-residue chain is Phosphoribosylformylglycinamidine cyclo-ligase (345 aa).

Belongs to the AIR synthase family.

Its subcellular location is the cytoplasm. It carries out the reaction 2-formamido-N(1)-(5-O-phospho-beta-D-ribosyl)acetamidine + ATP = 5-amino-1-(5-phospho-beta-D-ribosyl)imidazole + ADP + phosphate + H(+). Its pathway is purine metabolism; IMP biosynthesis via de novo pathway; 5-amino-1-(5-phospho-D-ribosyl)imidazole from N(2)-formyl-N(1)-(5-phospho-D-ribosyl)glycinamide: step 2/2. This chain is Phosphoribosylformylglycinamidine cyclo-ligase, found in Actinobacillus pleuropneumoniae serotype 5b (strain L20).